Reading from the N-terminus, the 226-residue chain is 2-C-methyl-D-erythritol 4-phosphate cytidylyltransferase (226 aa).

Belongs to the IspD/TarI cytidylyltransferase family. IspD subfamily.

It catalyses the reaction 2-C-methyl-D-erythritol 4-phosphate + CTP + H(+) = 4-CDP-2-C-methyl-D-erythritol + diphosphate. It participates in isoprenoid biosynthesis; isopentenyl diphosphate biosynthesis via DXP pathway; isopentenyl diphosphate from 1-deoxy-D-xylulose 5-phosphate: step 2/6. Its function is as follows. Catalyzes the formation of 4-diphosphocytidyl-2-C-methyl-D-erythritol from CTP and 2-C-methyl-D-erythritol 4-phosphate (MEP). In Prochlorococcus marinus (strain MIT 9312), this protein is 2-C-methyl-D-erythritol 4-phosphate cytidylyltransferase.